A 158-amino-acid polypeptide reads, in one-letter code: MIYINQLMENEINKENNNIKRSVISSDLLDLLDFVNVDGCLFFKFQKIDNNISTVDLNDVSRQFLDLSGYELSINRFHIDDYVSNNILCQSILFLGEFKRKWQKIYPDIKCVVIITFQNDDVGRFSTFTFHKVRDGESVFELYEINNIAQAILVEFIN.

This is an uncharacterized protein from Pasteurella multocida (strain Pm70).